Here is a 293-residue protein sequence, read N- to C-terminus: Formamidopyrimidine-DNA glycosylase (293 aa).

The Schiff-base intermediate with DNA role is filled by P2. Catalysis depends on E3, which acts as the Proton donor. K58 (proton donor; for beta-elimination activity) is an active-site residue. DNA-binding residues include H104, R123, and R166. The segment at 257-293 (AVYDREGEPCRSKGCDGVVKRFVQNGRSTFWCPKCQK) adopts an FPG-type zinc-finger fold. R283 functions as the Proton donor; for delta-elimination activity in the catalytic mechanism.

The protein belongs to the FPG family. As to quaternary structure, monomer. The cofactor is Zn(2+).

It carries out the reaction Hydrolysis of DNA containing ring-opened 7-methylguanine residues, releasing 2,6-diamino-4-hydroxy-5-(N-methyl)formamidopyrimidine.. The catalysed reaction is 2'-deoxyribonucleotide-(2'-deoxyribose 5'-phosphate)-2'-deoxyribonucleotide-DNA = a 3'-end 2'-deoxyribonucleotide-(2,3-dehydro-2,3-deoxyribose 5'-phosphate)-DNA + a 5'-end 5'-phospho-2'-deoxyribonucleoside-DNA + H(+). Its function is as follows. Involved in base excision repair of DNA damaged by oxidation or by mutagenic agents. Acts as a DNA glycosylase that recognizes and removes damaged bases. Has a preference for oxidized purines, such as 7,8-dihydro-8-oxoguanine (8-oxoG). Has AP (apurinic/apyrimidinic) lyase activity and introduces nicks in the DNA strand. Cleaves the DNA backbone by beta-delta elimination to generate a single-strand break at the site of the removed base with both 3'- and 5'-phosphates. The polypeptide is Formamidopyrimidine-DNA glycosylase (Rhodopseudomonas palustris (strain BisB18)).